A 129-amino-acid polypeptide reads, in one-letter code: Large ribosomal subunit protein bL12 (129 aa).

Belongs to the bacterial ribosomal protein bL12 family. In terms of assembly, homodimer. Part of the ribosomal stalk of the 50S ribosomal subunit. Forms a multimeric L10(L12)X complex, where L10 forms an elongated spine to which 2 to 4 L12 dimers bind in a sequential fashion. Binds GTP-bound translation factors.

In terms of biological role, forms part of the ribosomal stalk which helps the ribosome interact with GTP-bound translation factors. Is thus essential for accurate translation. The protein is Large ribosomal subunit protein bL12 of Mycobacteroides abscessus (strain ATCC 19977 / DSM 44196 / CCUG 20993 / CIP 104536 / JCM 13569 / NCTC 13031 / TMC 1543 / L948) (Mycobacterium abscessus).